The chain runs to 221 residues: GTP cyclohydrolase III (221 aa).

Belongs to the archaeal-type GTP cyclohydrolase family.

The enzyme catalyses GTP + 3 H2O = 2-amino-5-formylamino-6-(5-phospho-D-ribosylamino)pyrimidin-4(3H)-one + 2 phosphate + 2 H(+). Its function is as follows. Catalyzes the formation of 2-amino-5-formylamino-6-ribofuranosylamino-4(3H)-pyrimidinone ribonucleotide monophosphate and inorganic phosphate from GTP. Also has an independent pyrophosphate phosphohydrolase activity. This Pyrobaculum neutrophilum (strain DSM 2338 / JCM 9278 / NBRC 100436 / V24Sta) (Thermoproteus neutrophilus) protein is GTP cyclohydrolase III.